Reading from the N-terminus, the 338-residue chain is Putative pectinesterase 63 (338 aa).

The signal sequence occupies residues 1-24 (MGYNYVSLIVTILLVVITSPVVFG). Substrate contacts are provided by Thr-116 and Gln-151. Residue Asp-174 is the Proton donor of the active site. The active-site Nucleophile is the Asp-195. Arg-252 is a substrate binding site.

Belongs to the pectinesterase family.

It localises to the secreted. The protein resides in the cell wall. The enzyme catalyses [(1-&gt;4)-alpha-D-galacturonosyl methyl ester](n) + n H2O = [(1-&gt;4)-alpha-D-galacturonosyl](n) + n methanol + n H(+). Its pathway is glycan metabolism; pectin degradation; 2-dehydro-3-deoxy-D-gluconate from pectin: step 1/5. In terms of biological role, acts in the modification of cell walls via demethylesterification of cell wall pectin. This chain is Putative pectinesterase 63 (PME63), found in Arabidopsis thaliana (Mouse-ear cress).